Here is a 143-residue protein sequence, read N- to C-terminus: Large ribosomal subunit protein uL15 (143 aa).

The segment at 1–57 is disordered; the sequence is MQLNNLKPAAGSKHAKRRVGRGIGSGLGKTAGRGHKGQKSRSGGFHKVGFEGGQMPL. Gly residues predominate over residues 21 to 31; the sequence is RGIGSGLGKTA.

This sequence belongs to the universal ribosomal protein uL15 family. In terms of assembly, part of the 50S ribosomal subunit.

In terms of biological role, binds to the 23S rRNA. This is Large ribosomal subunit protein uL15 from Ralstonia nicotianae (strain ATCC BAA-1114 / GMI1000) (Ralstonia solanacearum).